We begin with the raw amino-acid sequence, 319 residues long: Taste receptor type 2 member 30 (319 aa).

Residue methionine 1 is a topological domain, extracellular. Residues 2-22 (ITFLPIIFSILIVVIFVIGNF) traverse the membrane as a helical segment. Over 23–46 (ANGFIALVNSIEWVKRQKISFVDQ) the chain is Cytoplasmic. Residues 47–67 (ILTALAVSRVGLLWVLLLHWY) traverse the membrane as a helical segment. The Extracellular segment spans residues 68-86 (ATQLNPAFYSVEVRITAYN). Residues 87-107 (VWAVTNHFSSWLATSLSMFYL) traverse the membrane as a helical segment. Residues 108–126 (LRIANFSNLIFLRIKRRVK) are Cytoplasmic-facing. The helical transmembrane segment at 127–147 (SVVLVILLGPLLFLVCHLFVI) threads the bilayer. Residues 148–178 (NMDETVWTKEYEGNVTWKIKLRSAMYHSNMT) are Extracellular-facing. 2 N-linked (GlcNAc...) asparagine glycosylation sites follow: asparagine 161 and asparagine 176. The helical transmembrane segment at 179-199 (LTMLANFVPLTLTLISFLLLI) threads the bilayer. Residues 200–229 (CSLCKHLKKMQLHGKGSQDPSTKVHIKALQ) are Cytoplasmic-facing. A helical transmembrane segment spans residues 230–250 (TVTSFLLLCAIYFLSMIISVC). The Extracellular portion of the chain corresponds to 251 to 259 (NFGRLEKQP). Residues 260-280 (VFMFCQAIIFSYPSTHPFILI) form a helical membrane-spanning segment. Over 281–319 (LGNKKLKQIFLSVLRHVRYWVKDRSLRLHRFTRGALCVF) the chain is Cytoplasmic.

This sequence belongs to the G-protein coupled receptor T2R family. In terms of tissue distribution, expressed in subsets of taste receptor cells of the tongue and exclusively in gustducin-positive cells.

The protein resides in the membrane. Receptor that may play a role in the perception of bitterness and is gustducin-linked. May play a role in sensing the chemical composition of the gastrointestinal content. The activity of this receptor may stimulate alpha gustducin, mediate PLC-beta-2 activation and lead to the gating of TRPM5. This is Taste receptor type 2 member 30 (TAS2R30) from Homo sapiens (Human).